The primary structure comprises 219 residues: Ras-like protein 1 (219 aa).

15–22 (GDGGVGKS) contributes to the GTP binding site. Positions 37–45 (YDPTIEDSY) match the Effector region motif. Residues 62–66 (DTAGQ) and 121–124 (NKCD) each bind GTP. At C216 the chain carries Cysteine methyl ester. C216 is lipidated: S-farnesyl cysteine. The propeptide at 217 to 219 (VIC) is removed in mature form.

Belongs to the small GTPase superfamily. Ras family. As to quaternary structure, scd1, scd2, cdc42, and ras1, in its GTP-bound state, act cooperatively to form a protein complex. In terms of processing, palmitoylated by the erf2-erf4 complex.

The protein resides in the cell membrane. It carries out the reaction GTP + H2O = GDP + phosphate + H(+). Its activity is regulated as follows. Alternates between an inactive form bound to GDP and an active form bound to GTP. Activated by a guanine nucleotide-exchange factor (GEF) and inactivated by a GTPase-activating protein (GAP). In terms of biological role, participates in the process of sexual differentiation and the determination of cell shape. Essential for mating and for recognition of the mating pheromone, but not for vegetative growth. Does not regulate the intracellular cAMP level. Regulates two downstream pathways, namely the byr2/byr1/spk1 mitogen-activated protein kinase cascade and the cdc42 small G protein pathway. The former is relevant to mating and sporulation, whereas the latter is relevant to mating, cell growth and cell morphology. The protein is Ras-like protein 1 (ras1) of Schizosaccharomyces pombe (strain 972 / ATCC 24843) (Fission yeast).